The chain runs to 124 residues: Fluoride-specific ion channel FluC 2 (124 aa).

Helical transmembrane passes span 1–21 (MNFL…YAIT), 36–58 (SNLP…FIFG), 63–85 (VFIY…TMNT), and 104–124 (LSSY…AILF). 2 residues coordinate Na(+): Gly-75 and Thr-78.

Belongs to the fluoride channel Fluc/FEX (TC 1.A.43) family. As to quaternary structure, heterodimer composed of FluC1 and FluC2. Neither FluC1 nor FluC2 alone catalyzes fluoride efflux from liposomes.

It is found in the cell membrane. It catalyses the reaction fluoride(in) = fluoride(out). Na(+) is not transported, but it plays an essential structural role and its presence is essential for fluoride channel function. Its function is as follows. Fluoride-specific ion channel. Important for reducing fluoride concentration in the cell, thus reducing its toxicity. The protein is Fluoride-specific ion channel FluC 2 of Lactobacillus acidophilus (strain ATCC 700396 / NCK56 / N2 / NCFM).